The chain runs to 108 residues: UPF0060 membrane protein YnfA (108 aa).

Residues 1 to 5 (MIKTT) lie on the Periplasmic side of the membrane. A helical transmembrane segment spans residues 6-26 (LLFFATALCEIIGCFLPWLWL). The Cytoplasmic segment spans residues 27 to 30 (KRNA). Residues 31-51 (SIWLLLPAGISLALFVWLLTL) traverse the membrane as a helical segment. Residues 52–60 (HPAASGRVY) lie on the Periplasmic side of the membrane. Residues 61-81 (AAYGGVYVCTALMWLRVVDGV) traverse the membrane as a helical segment. The Cytoplasmic portion of the chain corresponds to 82-84 (KLT). A helical transmembrane segment spans residues 85-105 (LYDWTGPLIALCGMLIIVVGW). Residues 106 to 108 (GRT) are Periplasmic-facing.

The protein belongs to the UPF0060 family.

Its subcellular location is the cell inner membrane. In Escherichia coli O157:H7, this protein is UPF0060 membrane protein YnfA.